The primary structure comprises 82 residues: Small ribosomal subunit protein bS18 (82 aa).

Residues 1-20 (MSEINQTVTRRPFHRRRKTC) form a disordered region.

Belongs to the bacterial ribosomal protein bS18 family. In terms of assembly, part of the 30S ribosomal subunit. Forms a tight heterodimer with protein bS6.

Functionally, binds as a heterodimer with protein bS6 to the central domain of the 16S rRNA, where it helps stabilize the platform of the 30S subunit. The protein is Small ribosomal subunit protein bS18 of Bartonella quintana (strain Toulouse) (Rochalimaea quintana).